Consider the following 219-residue polypeptide: MASASEPPASPRDAADQNFDYMFKLLLIGNSSVGKTSFLFRYADDSFTPAFVSTVGIDFKVKTVYRHDKRIKLQIWDTAGQERYRTITTAYYRGAMGFLLMYDIANQESFTAVQDWATQIKTYSWDNAQVILVGNKCDLEDERVVSAEDGQRLAGDLGFEFFEASAKENINVKQVFERLVDIICDKMNESLEPSSSPGSNGKGPALGDTPPPQPSSCGC.

Ala-2 is subject to N-acetylalanine. 29-37 provides a ligand contact to GDP; it reads GNSSVGKTS. Residues Ser-31, Ser-32, Val-33, Gly-34, Lys-35, Thr-36, Ser-37, Pro-49, and Ser-53 each coordinate GTP. Thr-36 contacts Mg(2+). The short motif at 49-58 is the Switch 1 element; that stretch reads PAFVSTVGID. The Mg(2+) site is built by Thr-54 and Asp-77. Gly-80 is a binding site for GTP. Positions 80–96 match the Switch 2 motif; the sequence is GQERYRTITTAYYRGAM. The residue at position 86 (Thr-86) is a Phosphothreonine. The GTP site is built by Asn-135, Lys-136, Asp-138, Ala-166, and Lys-167. Residues 135–138 and 165–167 each bind GDP; these read NKCD and SAK. The residue at position 190 (Ser-190) is a Phosphoserine. The tract at residues 190–219 is disordered; it reads SLEPSSSPGSNGKGPALGDTPPPQPSSCGC. The span at 193-203 shows a compositional bias: low complexity; it reads PSSSPGSNGKG. Residues 209-219 show a composition bias toward pro residues; that stretch reads TPPPQPSSCGC. S-geranylgeranyl cysteine attachment occurs at residues Cys-217 and Cys-219. The residue at position 219 (Cys-219) is a Cysteine methyl ester; partial.

It belongs to the small GTPase superfamily. Rab family. As to quaternary structure, interacts with RIMS1, RIMS2, RPH3A and RPH3AL. Interacts with RAB3IP. The GTP-bound form interacts with REP15. Interacts with CHM; phosphorylation at Thr-86 disrupts this interaction. Interacts with MADD (via uDENN domain); the GTP-bound form is preferred for interaction. Mg(2+) is required as a cofactor. In fetal glands the majority of the proteins are methylated, whereas in neonatal and adult glands, only 50% are methylated. Post-translationally, phosphorylation of Thr-86 in the switch II region by LRRK2 prevents the association of RAB regulatory proteins, including CHM. In terms of tissue distribution, highest levels found in lung.

It localises to the cell membrane. It catalyses the reaction GTP + H2O = GDP + phosphate + H(+). With respect to regulation, regulated by guanine nucleotide exchange factors (GEFs) which promote the exchange of bound GDP for free GTP. Regulated by GTPase activating proteins (GAPs) which increase the GTP hydrolysis activity. Inhibited by GDP dissociation inhibitors (GDIs) which prevent Rab-GDP dissociation. The small GTPases Rab are key regulators of intracellular membrane trafficking, from the formation of transport vesicles to their fusion with membranes. Rabs cycle between an inactive GDP-bound form and an active GTP-bound form that is able to recruit to membranes different sets of downstream effectors directly responsible for vesicle formation, movement, tethering and fusion. RAB3D may be involved in the insulin-induced exocytosis of GLUT4-containing vesicles in adipocytes. The sequence is that of GTP-binding protein Rab-3D from Rattus norvegicus (Rat).